The sequence spans 488 residues: Bifunctional protein GlmU (488 aa).

A pyrophosphorylase region spans residues 1–237 (MPRTRTPLAA…AEEASGVNDR (237 aa)). UDP-N-acetyl-alpha-D-glucosamine contacts are provided by residues 13–16 (LAAG), Lys-27, Gln-82, 87–88 (GT), 110–112 (SGD), Gly-149, Glu-164, Asn-179, and Asn-235. A Mg(2+)-binding site is contributed by Asp-112. Residue Asn-235 participates in Mg(2+) binding. The tract at residues 238–258 (VELSRANRVMVGRLAEAFMRA) is linker. The N-acetyltransferase stretch occupies residues 259–488 (GVTIEDPARF…KGRPAARRAS (230 aa)). Residues Arg-341 and Lys-359 each coordinate UDP-N-acetyl-alpha-D-glucosamine. The active-site Proton acceptor is His-371. Residues Tyr-374 and Asn-385 each contribute to the UDP-N-acetyl-alpha-D-glucosamine site. Acetyl-CoA is bound by residues Ala-388, 394 to 395 (NY), Ser-413, Ala-431, and Arg-448. The tract at residues 459-488 (AQRQAEKQMKGTATGPASARKGRPAARRAS) is disordered. The span at 478-488 (RKGRPAARRAS) shows a compositional bias: basic residues.

It in the N-terminal section; belongs to the N-acetylglucosamine-1-phosphate uridyltransferase family. The protein in the C-terminal section; belongs to the transferase hexapeptide repeat family. As to quaternary structure, homotrimer. It depends on Mg(2+) as a cofactor.

The protein localises to the cytoplasm. The catalysed reaction is alpha-D-glucosamine 1-phosphate + acetyl-CoA = N-acetyl-alpha-D-glucosamine 1-phosphate + CoA + H(+). It catalyses the reaction N-acetyl-alpha-D-glucosamine 1-phosphate + UTP + H(+) = UDP-N-acetyl-alpha-D-glucosamine + diphosphate. Its pathway is nucleotide-sugar biosynthesis; UDP-N-acetyl-alpha-D-glucosamine biosynthesis; N-acetyl-alpha-D-glucosamine 1-phosphate from alpha-D-glucosamine 6-phosphate (route II): step 2/2. The protein operates within nucleotide-sugar biosynthesis; UDP-N-acetyl-alpha-D-glucosamine biosynthesis; UDP-N-acetyl-alpha-D-glucosamine from N-acetyl-alpha-D-glucosamine 1-phosphate: step 1/1. It functions in the pathway bacterial outer membrane biogenesis; LPS lipid A biosynthesis. Catalyzes the last two sequential reactions in the de novo biosynthetic pathway for UDP-N-acetylglucosamine (UDP-GlcNAc). The C-terminal domain catalyzes the transfer of acetyl group from acetyl coenzyme A to glucosamine-1-phosphate (GlcN-1-P) to produce N-acetylglucosamine-1-phosphate (GlcNAc-1-P), which is converted into UDP-GlcNAc by the transfer of uridine 5-monophosphate (from uridine 5-triphosphate), a reaction catalyzed by the N-terminal domain. This chain is Bifunctional protein GlmU, found in Anaeromyxobacter dehalogenans (strain 2CP-1 / ATCC BAA-258).